We begin with the raw amino-acid sequence, 490 residues long: Xylulose kinase (490 aa).

Substrate contacts are provided by histidine 99, arginine 170, aspartate 280, and asparagine 281. ATP contacts are provided by residues tryptophan 355, 441–442 (GA), and asparagine 445.

This sequence belongs to the FGGY kinase family. In terms of assembly, monomer.

The catalysed reaction is D-xylulose + ATP = D-xylulose 5-phosphate + ADP + H(+). In terms of biological role, phosphorylates D-xylulose to produce D-xylulose 5-phosphate, a molecule that may play an important role in the regulation of glucose metabolism and lipogenesis. This Bos taurus (Bovine) protein is Xylulose kinase (XYLB).